The sequence spans 723 residues: Methionine--tRNA ligase (723 aa).

Residues 11–21 (PYANGPIHAGH) carry the 'HIGH' region motif. Residues Cys-143, Cys-146, Cys-156, and Cys-159 each coordinate Zn(2+). The 'KMSKS' region motif lies at 344 to 348 (KFSTS). Position 347 (Thr-347) interacts with ATP. In terms of domain architecture, tRNA-binding spans 623–723 (DFAKLDLRVG…KEVKLGAKVR (101 aa)).

The protein belongs to the class-I aminoacyl-tRNA synthetase family. MetG type 1 subfamily. In terms of assembly, homodimer. Requires Zn(2+) as cofactor.

It localises to the cytoplasm. It carries out the reaction tRNA(Met) + L-methionine + ATP = L-methionyl-tRNA(Met) + AMP + diphosphate. Its function is as follows. Is required not only for elongation of protein synthesis but also for the initiation of all mRNA translation through initiator tRNA(fMet) aminoacylation. In Pyrococcus horikoshii (strain ATCC 700860 / DSM 12428 / JCM 9974 / NBRC 100139 / OT-3), this protein is Methionine--tRNA ligase.